A 427-amino-acid polypeptide reads, in one-letter code: Adenylosuccinate synthetase (427 aa).

GTP-binding positions include 12–18 (GDEGKGK) and 40–42 (GHT). Asp13 (proton acceptor) is an active-site residue. Mg(2+) is bound by residues Asp13 and Gly40. IMP is bound by residues 13–16 (DEGK), 38–41 (NAGH), Thr128, Arg142, Gln223, Thr238, and Arg302. His41 functions as the Proton donor in the catalytic mechanism. 298–304 (VTTGRDR) lines the substrate pocket. GTP is bound by residues Arg304, 330-332 (KLD), and 412-414 (GVG).

Belongs to the adenylosuccinate synthetase family. Homodimer. Requires Mg(2+) as cofactor.

It is found in the cytoplasm. The enzyme catalyses IMP + L-aspartate + GTP = N(6)-(1,2-dicarboxyethyl)-AMP + GDP + phosphate + 2 H(+). It functions in the pathway purine metabolism; AMP biosynthesis via de novo pathway; AMP from IMP: step 1/2. Its function is as follows. Plays an important role in the de novo pathway of purine nucleotide biosynthesis. Catalyzes the first committed step in the biosynthesis of AMP from IMP. The polypeptide is Adenylosuccinate synthetase (Streptomyces griseus subsp. griseus (strain JCM 4626 / CBS 651.72 / NBRC 13350 / KCC S-0626 / ISP 5235)).